The primary structure comprises 181 residues: Dehydration-responsive element-binding protein 1E (181 aa).

Positions Lys-14 to Arg-26 match the Nuclear localization signal motif. The AP2/ERF DNA-binding region spans Ile-29–Ser-86.

The protein belongs to the AP2/ERF transcription factor family. ERF subfamily.

It is found in the nucleus. In terms of biological role, transcriptional activator that binds specifically to the DNA sequence 5'-[AG]CCGAC-3'. Binding to the C-repeat/DRE element mediates cold or dehydration-inducible transcription. CBF/DREB1 factors play a key role in freezing tolerance and cold acclimation. This Arabidopsis thaliana (Mouse-ear cress) protein is Dehydration-responsive element-binding protein 1E (DREB1E).